A 169-amino-acid chain; its full sequence is Allophycocyanin subunit beta-18 (169 aa).

An N4-methylasparagine modification is found at Asn72. Cys82 contributes to the (2R,3E)-phycocyanobilin binding site.

Belongs to the phycobiliprotein family. Heterodimer of an alpha and a beta chain. Contains one covalently linked bilin chromophore.

Its subcellular location is the plastid. The protein resides in the chloroplast thylakoid membrane. Light-harvesting photosynthetic bile pigment-protein from the phycobiliprotein complex. Allophycocyanin has a maximum absorption at approximately 650 nanometers. The polypeptide is Allophycocyanin subunit beta-18 (apcF) (Pyropia yezoensis (Susabi-nori)).